Here is a 538-residue protein sequence, read N- to C-terminus: Mitochondria-eating protein (538 aa).

The segment at 1-273 (MAENLKRLVS…PRSRSCSRSR (273 aa)) is interaction with YWHAG/14-3-3 protein gamma. Serine 85 carries the phosphoserine modification. The disordered stretch occupies residues 97-137 (SKVPSLQDTFDRERHKDPSPRDRDMQQLDSNLNSTRSQCNQ). Positions 105-122 (TFDRERHKDPSPRDRDMQ) are enriched in basic and acidic residues. Coiled-coil stretches lie at residues 118 to 187 (DRDM…RHRN) and 219 to 256 (DQQD…RSSR). The span at 123-137 (QLDSNLNSTRSQCNQ) shows a compositional bias: polar residues. Phosphoserine occurs at positions 156 and 159. Disordered regions lie at residues 173–226 (QLKS…TEAM) and 247–294 (KSAL…SKLS). Positions 181–210 (EDARHRNTDQRSSENRRSEPWSLEERKREQ) are enriched in basic and acidic residues. Over residues 211–224 (WNSLKQNADQQDTE) the composition is skewed to polar residues. The segment covering 253 to 278 (RSSRSRSPSPAPRSRSCSRSRSASPS) has biased composition (low complexity). Serine 287 and serine 509 each carry phosphoserine.

It belongs to the MIEAP family. As to quaternary structure, interacts (via coiled-coil domains) with BNIP3L (via BH3 domain). Interacts (via coiled-coil domains) with BNIP3 (via BH3 domain). In terms of assembly, interacts with YWHAG/14-3-3 protein gamma; a protein that also plays a role in MALM.

It localises to the cytoplasm. The protein localises to the cytosol. The protein resides in the mitochondrion outer membrane. Its subcellular location is the mitochondrion matrix. Functionally, key regulator of mitochondrial quality that mediates the repairing or degradation of unhealthy mitochondria in response to mitochondrial damage. Mediator of mitochondrial protein catabolic process (also named MALM) by mediating the degradation of damaged proteins inside mitochondria by promoting the accumulation in the mitochondrial matrix of hydrolases that are characteristic of the lysosomal lumen. Also involved in mitochondrion degradation of damaged mitochondria by promoting the formation of vacuole-like structures (named MIV), which engulf and degrade unhealthy mitochondria by accumulating lysosomes. The physical interaction of SPATA18/MIEAP, BNIP3 and BNIP3L/NIX at the mitochondrial outer membrane regulates the opening of a pore in the mitochondrial double membrane in order to mediate the translocation of lysosomal proteins from the cytoplasm to the mitochondrial matrix. Binds cardiolipin. May form molecular condensates (non-membrane-bounded organelles) within mitochondria that compartmentalize and promote cardiolipin metabolism. The chain is Mitochondria-eating protein (SPATA18) from Homo sapiens (Human).